We begin with the raw amino-acid sequence, 566 residues long: Viral IRF3-like protein (566 aa).

Disordered stretches follow at residues 151–170 (PRPF…PAFC) and 176–236 (QTGA…VHTD).

It belongs to the IRF family. In terms of assembly, interacts with host SKP2. Interacts with host USP7.

Functionally, plays a role in the inhibition of host immune response. Interferes with the transactivating potential of cellular IRFs IRF3 and IRF7 that play a critical role in the induction of IFNA and IFNB genes. Additionally, interferes with surface major histocompatibility complex class II (MHC-II) antigen presentation. The protein is Viral IRF3-like protein (vIRF-3) of Human herpesvirus 8 type P (isolate GK18) (HHV-8).